The chain runs to 508 residues: Photosystem II CP47 reaction center protein (508 aa).

A run of 6 helical transmembrane segments spans residues 21–36 (AVHIMHTALVAGWAGS), 101–115 (IVFSGLCFLAAIWHW), 140–156 (GIHLFLSGVACFGFGTF), 203–218 (IAAGTLGILAGLFHLS), 237–252 (VLSSSIAAVFFAAFVV), and 457–472 (SFALLFFFGHIWHGAR).

Belongs to the PsbB/PsbC family. PsbB subfamily. As to quaternary structure, PSII is composed of 1 copy each of membrane proteins PsbA, PsbB, PsbC, PsbD, PsbE, PsbF, PsbH, PsbI, PsbJ, PsbK, PsbL, PsbM, PsbT, PsbX, PsbY, PsbZ, Psb30/Ycf12, at least 3 peripheral proteins of the oxygen-evolving complex and a large number of cofactors. It forms dimeric complexes. It depends on Binds multiple chlorophylls. PSII binds additional chlorophylls, carotenoids and specific lipids. as a cofactor.

The protein localises to the plastid. It localises to the chloroplast thylakoid membrane. In terms of biological role, one of the components of the core complex of photosystem II (PSII). It binds chlorophyll and helps catalyze the primary light-induced photochemical processes of PSII. PSII is a light-driven water:plastoquinone oxidoreductase, using light energy to abstract electrons from H(2)O, generating O(2) and a proton gradient subsequently used for ATP formation. This chain is Photosystem II CP47 reaction center protein, found in Citrus sinensis (Sweet orange).